The primary structure comprises 601 residues: Glutathione-regulated potassium-efflux system protein KefB (601 aa).

Transmembrane regions (helical) follow at residues 4–24 (SDLLTAGVMFLFAAVAAVPLA), 29–49 (IGAVLGYLLAGIAIGPWGLGF), 55–75 (EILHFSELGVVFLMFIIGLEL), 87–107 (IFGVGAAQVMLSAVVLAGLLM), 115–135 (AAVIGGIGLAMSSTAMALQLM), 152–172 (VLLFQDLAVIPALALVPLLAG), 177–197 (HFDWIKVGMKVLAFAGMLIGG), 207–227 (FIADSGVREVFTAATLLLVLG), 230–250 (LFMDALGLSMALGTFIAGVLL), 262–282 (AIDPFKGLLLGLFFISVGMSL), 284–304 (LGVLYTHLLWVAVSVIVLVAV), 324–344 (MQFAGVLSQGGEFAFVLFSTA), and 356–376 (SLLLVTVTLSMMTTPLLMKLV). In terms of domain architecture, RCK N-terminal spans 400–519 (KPQVIVVGFG…AGVTQFSRET (120 aa)).

It belongs to the monovalent cation:proton antiporter 2 (CPA2) transporter (TC 2.A.37) family. KefB subfamily. Interacts with the regulatory subunit KefG.

It is found in the cell inner membrane. Its function is as follows. Pore-forming subunit of a potassium efflux system that confers protection against electrophiles. Catalyzes K(+)/H(+) antiport. The protein is Glutathione-regulated potassium-efflux system protein KefB of Citrobacter koseri (strain ATCC BAA-895 / CDC 4225-83 / SGSC4696).